Reading from the N-terminus, the 494-residue chain is DDB1- and CUL4-associated factor 4 (494 aa).

The segment at 1–65 is disordered; it reads MHQSSWKSRR…AGSSSVPDLP (65 aa). A compositionally biased stretch (basic residues) spans 7 to 20; it reads KSRRHRRRGHRHSA. The segment covering 51-60 has biased composition (low complexity); sequence STSSTAGSSS. WD repeat units follow at residues 367–406 and 409–450; these read FHDS…CIRQ and GHVN…LLRT.

In terms of assembly, interacts with DDB1 and CUL4A.

It functions in the pathway protein modification; protein ubiquitination. May function as a substrate receptor for CUL4-DDB1 E3 ubiquitin-protein ligase complex. This Bos taurus (Bovine) protein is DDB1- and CUL4-associated factor 4 (DCAF4).